The sequence spans 670 residues: DNA ligase (670 aa).

Residues aspartate 32–aspartate 36, serine 81–leucine 82, and glutamate 110 each bind NAD(+). The active-site N6-AMP-lysine intermediate is lysine 112. Positions 133, 170, 289, and 313 each coordinate NAD(+). Positions 407, 410, 425, and 431 each coordinate Zn(2+). The BRCT domain maps to glutamate 590–glycine 670.

This sequence belongs to the NAD-dependent DNA ligase family. LigA subfamily. The cofactor is Mg(2+). Mn(2+) is required as a cofactor.

It carries out the reaction NAD(+) + (deoxyribonucleotide)n-3'-hydroxyl + 5'-phospho-(deoxyribonucleotide)m = (deoxyribonucleotide)n+m + AMP + beta-nicotinamide D-nucleotide.. DNA ligase that catalyzes the formation of phosphodiester linkages between 5'-phosphoryl and 3'-hydroxyl groups in double-stranded DNA using NAD as a coenzyme and as the energy source for the reaction. It is essential for DNA replication and repair of damaged DNA. This chain is DNA ligase, found in Shewanella denitrificans (strain OS217 / ATCC BAA-1090 / DSM 15013).